The chain runs to 500 residues: Aldehyde dehydrogenase, mitochondrial (500 aa).

Residues lysine 35, lysine 56, lysine 61, and lysine 142 each carry the N6-acetyllysine modification. Glycine 245–glycine 250 contacts NAD(+). Glutamate 268 acts as the Proton acceptor in catalysis. The active-site Nucleophile is the cysteine 302. 8 positions are modified to N6-acetyllysine: lysine 351, lysine 358, lysine 366, lysine 390, lysine 409, lysine 411, lysine 424, and lysine 434.

It belongs to the aldehyde dehydrogenase family. As to quaternary structure, homotetramer. Post-translationally, in response to mitochondrial stress, the precursor protein is ubiquitinated by the SIFI complex in the cytoplasm before mitochondrial import, leading to its degradation. Within the SIFI complex, UBR4 initiates ubiquitin chain that are further elongated or branched by KCMF1.

The protein localises to the mitochondrion matrix. It catalyses the reaction an aldehyde + NAD(+) + H2O = a carboxylate + NADH + 2 H(+). Its pathway is alcohol metabolism; ethanol degradation; acetate from ethanol: step 2/2. Required for clearance of cellular formaldehyde, a cytotoxic and carcinogenic metabolite that induces DNA damage. In Mesocricetus auratus (Golden hamster), this protein is Aldehyde dehydrogenase, mitochondrial (ALDH2).